The sequence spans 293 residues: Ribosomal protein L11 methyltransferase (293 aa).

S-adenosyl-L-methionine is bound by residues Thr-145, Gly-166, Asp-188, and Asn-230.

Belongs to the methyltransferase superfamily. PrmA family.

Its subcellular location is the cytoplasm. The enzyme catalyses L-lysyl-[protein] + 3 S-adenosyl-L-methionine = N(6),N(6),N(6)-trimethyl-L-lysyl-[protein] + 3 S-adenosyl-L-homocysteine + 3 H(+). In terms of biological role, methylates ribosomal protein L11. The sequence is that of Ribosomal protein L11 methyltransferase from Shewanella frigidimarina (strain NCIMB 400).